The chain runs to 161 residues: Urease accessory protein UreE (161 aa).

The protein belongs to the UreE family.

The protein resides in the cytoplasm. Involved in urease metallocenter assembly. Binds nickel. Probably functions as a nickel donor during metallocenter assembly. The polypeptide is Urease accessory protein UreE (Arthrobacter sp. (strain FB24)).